The primary structure comprises 364 residues: Phosphoserine aminotransferase (364 aa).

L-glutamate is bound at residue Arg-46. Residues 80-81 (AR), Trp-106, Thr-157, Asp-176, and Gln-199 contribute to the pyridoxal 5'-phosphate site. At Lys-200 the chain carries N6-(pyridoxal phosphate)lysine. 241 to 242 (NT) contacts pyridoxal 5'-phosphate.

It belongs to the class-V pyridoxal-phosphate-dependent aminotransferase family. SerC subfamily. As to quaternary structure, homodimer. Pyridoxal 5'-phosphate is required as a cofactor.

The protein resides in the cytoplasm. The catalysed reaction is O-phospho-L-serine + 2-oxoglutarate = 3-phosphooxypyruvate + L-glutamate. It carries out the reaction 4-(phosphooxy)-L-threonine + 2-oxoglutarate = (R)-3-hydroxy-2-oxo-4-phosphooxybutanoate + L-glutamate. Its pathway is amino-acid biosynthesis; L-serine biosynthesis; L-serine from 3-phospho-D-glycerate: step 2/3. It participates in cofactor biosynthesis; pyridoxine 5'-phosphate biosynthesis; pyridoxine 5'-phosphate from D-erythrose 4-phosphate: step 3/5. Catalyzes the reversible conversion of 3-phosphohydroxypyruvate to phosphoserine and of 3-hydroxy-2-oxo-4-phosphonooxybutanoate to phosphohydroxythreonine. This chain is Phosphoserine aminotransferase, found in Vibrio parahaemolyticus serotype O3:K6 (strain RIMD 2210633).